The primary structure comprises 172 residues: T-cell receptor gamma chain C region C7.5 (172 aa).

Residues 1 to 140 (DKKLDADISP…QFTITSAYYT (140 aa)) are c region. Residues 141-160 (YLLLLLKSVIYLAIISFSLL) traverse the membrane as a helical segment. Residues 161 to 172 (RRTSVCCNEKKS) are Cytoplasmic-facing.

It is found in the membrane. The sequence is that of T-cell receptor gamma chain C region C7.5 from Mus musculus (Mouse).